Consider the following 76-residue polypeptide: Conotoxin Gla(1)-TxVI (76 aa).

Residues 1–19 form the signal peptide; sequence MEKLTILLLVAAVLMSTQA. Positions 20-45 are excised as a propeptide; the sequence is LVERAGENHSKENINFLLKRKRAADR. A 6'-bromotryptophan modification is found at Trp48. Glu50 carries the 4-carboxyglutamate modification. Cystine bridges form between Cys51-Cys65, Cys58-Cys69, and Cys64-Cys73. Residue Pro61 is modified to 4-hydroxyproline. 4-carboxyglutamate occurs at positions 63, 67, and 70. The residue at position 76 (Trp76) is a 6'-bromotryptophan.

Expressed by the venom duct.

It localises to the secreted. This Conus textile (Cloth-of-gold cone) protein is Conotoxin Gla(1)-TxVI.